The primary structure comprises 701 residues: Triadin (701 aa).

The tract at residues 1–28 is disordered; the sequence is MTEITAEGNASTTTTVIDSKNGSVPKSP. The Cytoplasmic portion of the chain corresponds to 1 to 47; it reads MTEITAEGNASTTTTVIDSKNGSVPKSPGKVLKRTVTEDIVTTFSSP. Polar residues predominate over residues 8–24; it reads GNASTTTTVIDSKNGSV. The helical transmembrane segment at 48–68 threads the bilayer; that stretch reads AAWLLVIALIITWSAVAVVMF. Over 69–701 the chain is Lumenal; sequence DLVDYKNFSA…SSPGQKQQGQ (633 aa). N-linked (GlcNAc...) asparagine glycosylation is present at Asn-75. Positions 117-130 are enriched in acidic residues; that stretch reads DGDEDDDDGDEDTD. Disordered regions lie at residues 117–256, 273–654, and 676–701; these read DGDE…KHEQ, GDLR…TKRQ, and FPVT…QQGQ. 6 stretches are compositionally biased toward basic and acidic residues: residues 131–256, 303–351, 365–385, 391–426, 437–485, and 492–643; these read KGEI…KHEQ, EGKE…KAPE, AKKD…EEHP, EKKE…KEET, GKKE…EVKP, and VKKE…KAKE. The N-linked (GlcNAc...) asparagine glycan is linked to Asn-617. The span at 684 to 701 shows a compositional bias: low complexity; that stretch reads PGESSGQPSSPGQKQQGQ.

As to quaternary structure, homooligomer of variable subunit number; disulfide-linked. Interacts with CASQ1 and RYR1 in skeletal muscle. Interacts with CASQ2. In terms of processing, phosphorylated by CaMK2. N-glycosylated. In terms of tissue distribution, detected in heart (at protein level). Skeletal and cardiac muscle.

The protein localises to the sarcoplasmic reticulum membrane. In terms of biological role, contributes to the regulation of lumenal Ca2+ release via the sarcoplasmic reticulum calcium release channels RYR1 and RYR2, a key step in triggering skeletal and heart muscle contraction. Required for normal organization of the triad junction, where T-tubules and the sarcoplasmic reticulum terminal cisternae are in close contact. Required for normal skeletal muscle strength. Plays a role in excitation-contraction coupling in the heart and in regulating the rate of heart beats. This Canis lupus familiaris (Dog) protein is Triadin (TRDN).